The chain runs to 289 residues: Diaminopimelate epimerase (289 aa).

Substrate-binding residues include Asn17, Gln47, and Asn67. The active-site Proton donor is Cys76. Residues 77–78 (GN), Asn164, Asn198, and 216–217 (ER) contribute to the substrate site. Residue Cys225 is the Proton acceptor of the active site. 226–227 (GS) serves as a coordination point for substrate.

Belongs to the diaminopimelate epimerase family. In terms of assembly, homodimer.

Its subcellular location is the cytoplasm. The enzyme catalyses (2S,6S)-2,6-diaminopimelate = meso-2,6-diaminopimelate. It participates in amino-acid biosynthesis; L-lysine biosynthesis via DAP pathway; DL-2,6-diaminopimelate from LL-2,6-diaminopimelate: step 1/1. Its function is as follows. Catalyzes the stereoinversion of LL-2,6-diaminopimelate (L,L-DAP) to meso-diaminopimelate (meso-DAP), a precursor of L-lysine and an essential component of the bacterial peptidoglycan. The polypeptide is Diaminopimelate epimerase (Bradyrhizobium sp. (strain BTAi1 / ATCC BAA-1182)).